Here is a 132-residue protein sequence, read N- to C-terminus: AVLVTGCDSGFGFSLAKHLHSKGFLVFAGCLLKEVAEVNLWGTVRSFLPLLRRVVNISSMLGRSPYCITKFGVEAFSDCLRYEMHPLGVKVSVVEPGNFIAATSLYSPERMWDELPEVVRKYHPMDYYWWLR.

3–27 (LVTGCDSGFGFSLAKHLHSKGFLVF) is an NAD(+) binding site. Position 17 is an N6-acetyllysine (Lys17). Ser59 serves as a coordination point for substrate. Tyr66 (proton acceptor) is an active-site residue. Lys70 is subject to N6-acetyllysine. An O-linked (GlcNAc) serine glycan is attached at Ser77. Ser104 is modified (phosphoserine).

Belongs to the short-chain dehydrogenases/reductases (SDR) family. As to quaternary structure, homotetramer.

The protein localises to the mitochondrion inner membrane. Its subcellular location is the mitochondrion matrix. The catalysed reaction is (R)-3-hydroxybutanoate + NAD(+) = acetoacetate + NADH + H(+). With respect to regulation, requires phosphatidylcholine as an allosteric activator for enzymatic activity. This chain is D-beta-hydroxybutyrate dehydrogenase, mitochondrial, found in Mesocricetus auratus (Golden hamster).